A 304-amino-acid chain; its full sequence is Ribosomal RNA small subunit methyltransferase H (304 aa).

S-adenosyl-L-methionine-binding positions include 47 to 49 (GGH), Asp-66, Phe-93, Asp-108, and Gln-115.

It belongs to the methyltransferase superfamily. RsmH family.

The protein localises to the cytoplasm. The enzyme catalyses cytidine(1402) in 16S rRNA + S-adenosyl-L-methionine = N(4)-methylcytidine(1402) in 16S rRNA + S-adenosyl-L-homocysteine + H(+). Functionally, specifically methylates the N4 position of cytidine in position 1402 (C1402) of 16S rRNA. This Prochlorococcus marinus (strain NATL2A) protein is Ribosomal RNA small subunit methyltransferase H.